The primary structure comprises 295 residues: uncharacterized protein (295 aa).

The first 19 residues, 1–19 (MRKLLLIITVFFTFNVAQA), serve as a signal peptide directing secretion.

This is an uncharacterized protein from Rickettsia conorii (strain ATCC VR-613 / Malish 7).